A 187-amino-acid chain; its full sequence is Pseudo histidine-containing phosphotransfer protein 1 (187 aa).

In terms of domain architecture, HPt spans 74 to 169 (SPNFVEEVVT…AVLRQKLESY (96 aa)).

In terms of biological role, functions as a two-component phosphorelay mediator between cytokinin sensor histidine kinases and response regulators (B-type ARRs). Plays an important role in propagating cytokinin signal transduction. This is Pseudo histidine-containing phosphotransfer protein 1 from Oryza sativa subsp. japonica (Rice).